The chain runs to 688 residues: UvrABC system protein C (688 aa).

A compositionally biased stretch (basic and acidic residues) spans 1-14 (MSPLDQKNKPRGGA). The tract at residues 1 to 20 (MSPLDQKNKPRGGADDLPPE) is disordered. Residues 71–149 (NAPGVYRMMN…IKRLRPRFNV (79 aa)) form the GIY-YIG domain. The UVR domain maps to 259 to 294 (QKVKTEISAAMQQASEDLDFERAAIYRDRLAALSHV).

The protein belongs to the UvrC family. As to quaternary structure, interacts with UvrB in an incision complex.

It is found in the cytoplasm. Functionally, the UvrABC repair system catalyzes the recognition and processing of DNA lesions. UvrC both incises the 5' and 3' sides of the lesion. The N-terminal half is responsible for the 3' incision and the C-terminal half is responsible for the 5' incision. This chain is UvrABC system protein C, found in Mesorhizobium japonicum (strain LMG 29417 / CECT 9101 / MAFF 303099) (Mesorhizobium loti (strain MAFF 303099)).